Consider the following 761-residue polypeptide: Membrane protein of ER body-like protein (761 aa).

2 disordered regions span residues Met1–Thr85 and Gly120–Glu162. Residues Glu22–Val31 show a composition bias toward acidic residues. A compositionally biased stretch (low complexity) spans Val48 to Ser65. A compositionally biased stretch (basic and acidic residues) spans Pro74–Thr85. Positions Thr136–Ser154 are enriched in polar residues. The stretch at Ile186–Lys206 forms a coiled coil. 2 disordered regions span residues Ser338 to Ala374 and Gln416 to Gly448. Polar residues predominate over residues Gln416–Asn432. 5 helical membrane-spanning segments follow: residues Ile549 to Gly569, Ser573 to Ile593, Val640 to Phe660, Val670 to His690, and Ile702 to Phe722.

The protein belongs to the CCC1 family.

The protein resides in the endoplasmic reticulum membrane. Its function is as follows. Not essential for the accumulation of ER body components, including PYK10. This chain is Membrane protein of ER body-like protein (MEBL), found in Arabidopsis thaliana (Mouse-ear cress).